An 83-amino-acid chain; its full sequence is uncharacterized protein (83 aa).

This is an uncharacterized protein from Treponema pallidum (strain Nichols).